The primary structure comprises 39 residues: Photosystem II reaction center protein X (39 aa).

Residues S11 to S31 traverse the membrane as a helical segment.

The protein belongs to the PsbX family. Type 1 subfamily. As to quaternary structure, PSII is composed of 1 copy each of membrane proteins PsbA, PsbB, PsbC, PsbD, PsbE, PsbF, PsbH, PsbI, PsbJ, PsbK, PsbL, PsbM, PsbT, PsbX, PsbY, PsbZ, Psb30/Ycf12, at least 3 peripheral proteins of the oxygen-evolving complex and a large number of cofactors. It forms dimeric complexes.

Its subcellular location is the plastid. It is found in the cyanelle thylakoid membrane. Involved in the binding and/or turnover of quinones at the Q(B) site of photosystem II (PSII). PSII is a light-driven water plastoquinone oxidoreductase, using light energy to abstract electrons from H(2)O, generating a proton gradient subsequently used for ATP formation. The protein is Photosystem II reaction center protein X of Cyanophora paradoxa.